The primary structure comprises 478 residues: Cell division protein FtsZ homolog 2-1, chloroplastic (478 aa).

A disordered region spans residues 86-112 (EGTSTIVNPRKETSSGPVVEDFEEPSA). 128 to 132 (GGGSN) lines the GTP pocket. Phosphoserine; by PGK1 is present on Ser-143. Residues 217–219 (GTG), Glu-248, and Arg-252 each bind GTP. Thr-286 is subject to Phosphothreonine; by PGK1. Asp-296 lines the GTP pocket.

The protein belongs to the FtsZ family. Aggregates to form a contractile ring-like structure; contraction of the ring was accompanied by an increase in the filament turnover rate. Self-interacts and binds to FTSZ1 in heteromers to form two morphologically distinct types of filaments, termed type-I (smooth filaments) and -II (rough filaments), in a GTP-dependent manner; the GDP-induced disassembly is inhibited by ARC6. Interacts (via C-terminus) with ARC6; this interaction enables ARC3 binding to FTSZ2. Part of a complex made of ARC3, ARC6, FTSZ1 and FTSZ2. Binds to MCD1 in an ARC6-dependent manner. Binds to CDP1/PARC6. Part of a complex made of CDP1/PARC6, ARC3 and FtsZ proteins in the middle of the plastid; this complex enhances the dynamics of Z rings during chloroplast division. Binds to PGK1. Post-translationally, filaments containing FTSZ2-1 are stabilized when in complex with GTP but destabilized after conversion of GTP into GDP; ARC6 conteracts this destabilisation by preventing the dissociation of GDP-bound FTSZ2 molecules thus inhibiting filament disassembly whereas ARC3 promotes GTPase activity thus accelerating the conversion of GTP into GDP and triggering FtsZ2 filaments disassembly. In terms of processing, phosphorylation at Ser-143 is necessary for interactions with ARC3, ARC6, FTSZ1 and FTSZ2-2. Phosphorylations at Ser-143 and Thr-286 are required for the formation of contractile ring at the chloroplast midpoint.

The protein resides in the plastid. The protein localises to the chloroplast stroma. It localises to the chloroplast thylakoid membrane. With respect to regulation, GTPase activity is enhanced by ARC3. Functionally, exhibits GTPase activity which converts GTP ligands to GDP. Component of the plastid division machinery consisting in a binary fission accomplished by the simultaneous constriction of the FtsZ ring on the stromal side of the inner envelope membrane, and the ARC5 ring on the cytosolic side of the outer envelope membrane. Required for plastid division in a dose-dependent manner. In the vegetative shoot apex, at the shoot apical meristem (SAM), where the proplastid-to-chloroplast transition takes place, major contributor of plastid division in the L1 and L3 layers and contributes equally with FTSZ1 in the L2 layer. The polypeptide is Cell division protein FtsZ homolog 2-1, chloroplastic (Arabidopsis thaliana (Mouse-ear cress)).